Reading from the N-terminus, the 399-residue chain is Tyrosine--tRNA ligase (399 aa).

The 'HIGH' region motif lies at 42–51; it reads PTAPDLHLGH. The 'KMSKS' region signature appears at 226-230; the sequence is KMSKS. ATP is bound at residue lysine 229. Residues 336–396 form the S4 RNA-binding domain; the sequence is MPIAAVLNKA…GKKAFARITL (61 aa).

Belongs to the class-I aminoacyl-tRNA synthetase family. TyrS type 2 subfamily. In terms of assembly, homodimer.

Its subcellular location is the cytoplasm. It carries out the reaction tRNA(Tyr) + L-tyrosine + ATP = L-tyrosyl-tRNA(Tyr) + AMP + diphosphate + H(+). Catalyzes the attachment of tyrosine to tRNA(Tyr) in a two-step reaction: tyrosine is first activated by ATP to form Tyr-AMP and then transferred to the acceptor end of tRNA(Tyr). In Pseudomonas fluorescens (strain Pf0-1), this protein is Tyrosine--tRNA ligase.